A 200-amino-acid chain; its full sequence is Large ribosomal subunit protein uL4c (200 aa).

The disordered stretch occupies residues 45–71 (RAEIRGGGRKPWKQKGTGRARAGSRRS). Basic residues predominate over residues 51-68 (GGRKPWKQKGTGRARAGS).

The protein belongs to the universal ribosomal protein uL4 family. As to quaternary structure, part of the 50S ribosomal subunit.

The protein resides in the plastid. Its subcellular location is the chloroplast. In terms of biological role, probably binds the 23S rRNA. This chain is Large ribosomal subunit protein uL4c (rpl4), found in Cyanidioschyzon merolae (strain NIES-3377 / 10D) (Unicellular red alga).